Here is a 1938-residue protein sequence, read N- to C-terminus: Autophagy-related protein 2 homolog A (1938 aa).

Positions 14 to 111 (ERVCRYLLHH…QLTLQPRRGP (98 aa)) constitute a Chorein N-terminal domain. 7 positions are modified to phosphoserine: Ser765, Ser878, Ser892, Ser894, Ser1266, Ser1301, and Ser1309. The disordered stretch occupies residues 1242 to 1272 (DLHPPPRPPSPTEIAGQKLSESPASLPSCPP). Residues 1315–1359 (LFPGERSGAPPPSPPVGGPAGSLGSCSEEKEDEREEEGDGDTLDS) form a disordered region. A compositionally biased stretch (acidic residues) spans 1343 to 1359 (EKEDEREEEGDGDTLDS). The tract at residues 1358 to 1404 (DSDEFCILDAPGLGIPPRDGEPVVTQLHPGPIVVRDGYFSRPIGSTD) is WIPI-interacting. Ser1402 is subject to Phosphoserine. Disordered stretches follow at residues 1438–1476 (PHPG…GSGR) and 1614–1657 (GETS…PSPP). Over residues 1446–1464 (TGLSGPRSSPSRCSGPNRP) the composition is skewed to low complexity.

It belongs to the ATG2 family. Interacts with ATG9A (via C-terminus). Interacts (via WIPI-interacting region) with WDR45B/WIPI3. Interacts (via WIPI-interacting region) with WDR45/WIPI4. Interacts with TMEM41B. Interacts with VMP1.

The protein resides in the preautophagosomal structure membrane. Its subcellular location is the lipid droplet. The protein localises to the endoplasmic reticulum membrane. The catalysed reaction is a 1,2-diacyl-sn-glycero-3-phospho-L-serine(in) = a 1,2-diacyl-sn-glycero-3-phospho-L-serine(out). It carries out the reaction a 1,2-diacyl-sn-glycero-3-phosphoethanolamine(in) = a 1,2-diacyl-sn-glycero-3-phosphoethanolamine(out). Lipid transfer protein involved in autophagosome assembly. Tethers the edge of the isolation membrane (IM) to the endoplasmic reticulum (ER) and mediates direct lipid transfer from ER to IM for IM expansion. Binds to the ER exit site (ERES), which is the membrane source for autophagosome formation, and extracts phospholipids from the membrane source and transfers them to ATG9 (ATG9A or ATG9B) to the IM for membrane expansion. Lipid transfer activity is enhanced by WIPI1 and WDR45/WIPI4, which promote ATG2A-association with phosphatidylinositol 3-monophosphate (PI3P)-containing membranes. Also regulates lipid droplets morphology and distribution within the cell. The protein is Autophagy-related protein 2 homolog A of Homo sapiens (Human).